The chain runs to 273 residues: MPLSTSLLGKKNTYKDSYDATLLFKIPRINNRNVLGIDSNHLPFYGVDIWNTYEISCLNKNGKPLVGIGTFYIPADSENIVESKSFKLYLNSFNNFIIESIEELERIILQDLSNVTYAKVTGRIFPINTKIEFGIPSGKNIDNLDIVCNNYGPPDNSLIEYEDVLVEEEIYSNLFKSNCLVTGQPDWGTIVIKYKGKKLKYDSFLRYLISFRNFNEFAEQCAERIFIDIKNSINLDFLSIYIVYTRRGGIDICPYRSTDKSYTLPNDKRLIRQ.

Residue 81-83 (VES) coordinates substrate. 83-84 (SK) serves as a coordination point for NADPH. Residue C179 is the Thioimide intermediate of the active site. Catalysis depends on D186, which acts as the Proton donor. 218–219 (AE) is a substrate binding site. 247-248 (RG) is a binding site for NADPH.

The protein belongs to the GTP cyclohydrolase I family. QueF type 2 subfamily. Homodimer.

Its subcellular location is the cytoplasm. It carries out the reaction 7-aminomethyl-7-carbaguanine + 2 NADP(+) = 7-cyano-7-deazaguanine + 2 NADPH + 3 H(+). It functions in the pathway tRNA modification; tRNA-queuosine biosynthesis. Functionally, catalyzes the NADPH-dependent reduction of 7-cyano-7-deazaguanine (preQ0) to 7-aminomethyl-7-deazaguanine (preQ1). The sequence is that of NADPH-dependent 7-cyano-7-deazaguanine reductase from Rickettsia prowazekii (strain Madrid E).